Here is a 380-residue protein sequence, read N- to C-terminus: MAPNIRKSHPLLKMINNSLIDLPTPSNISAWWNFGSLLAVCLITQILTGLLLAMHYTADTTLAFSSVAHTCRNVQYGWLIRNLHANGASFFFICIFLHIGRGLYYGSYLYKETWNTGVILLLTLMATAFVGYVLPWGQMSFWGATVITNLFSAIPYIGQTLVEWAWGGFSVDNPTLTRFFALHFLLPFVIAGITIIHLTFLHESGSNNPLGISSNSDKIPFHPYYSIKDILGLALMFIPFLTLTLFSPNFLGDPENFSPANPLVTPPHIKPEWYFLFAYAILRSIPNKLGGVLALAASVLILLLIPFLHKSKQRTMTFRPLSQTLFWLLVANLLILTWIGSQPVEHPFIIIGQMASLSYFSILLILFPMIGTLENKILNY.

4 helical membrane passes run 34–54 (FGSL…LLAM), 78–99 (WLIR…FLHI), 114–134 (WNTG…GYVL), and 179–199 (FFAL…IHLT). Residues H84 and H98 each coordinate heme b. Heme b is bound by residues H183 and H197. H202 contributes to the a ubiquinone binding site. Transmembrane regions (helical) follow at residues 227-247 (IKDI…TLFS), 289-309 (LGGV…PFLH), 321-341 (LSQT…WIGS), and 348-368 (FIII…ILFP).

It belongs to the cytochrome b family. As to quaternary structure, the cytochrome bc1 complex contains 11 subunits: 3 respiratory subunits (MT-CYB, CYC1 and UQCRFS1), 2 core proteins (UQCRC1 and UQCRC2) and 6 low-molecular weight proteins (UQCRH/QCR6, UQCRB/QCR7, UQCRQ/QCR8, UQCR10/QCR9, UQCR11/QCR10 and a cleavage product of UQCRFS1). This cytochrome bc1 complex then forms a dimer. Heme b serves as cofactor.

It localises to the mitochondrion inner membrane. Functionally, component of the ubiquinol-cytochrome c reductase complex (complex III or cytochrome b-c1 complex) that is part of the mitochondrial respiratory chain. The b-c1 complex mediates electron transfer from ubiquinol to cytochrome c. Contributes to the generation of a proton gradient across the mitochondrial membrane that is then used for ATP synthesis. In Alectoris graeca (Rock partridge), this protein is Cytochrome b (MT-CYB).